Consider the following 387-residue polypeptide: Queuine tRNA-ribosyltransferase (387 aa).

Residue Asp93 is the Proton acceptor of the active site. Residues 93–97 (DSGGF), Asp147, Gln190, and Gly217 contribute to the substrate site. The RNA binding stretch occupies residues 248 to 254 (GVGTPDD). Residue Asp267 is the Nucleophile of the active site. Residues 272–276 (TRAGR) are RNA binding; important for wobble base 34 recognition. Cys305, Cys307, Cys310, and His336 together coordinate Zn(2+).

Belongs to the queuine tRNA-ribosyltransferase family. Homodimer. Within each dimer, one monomer is responsible for RNA recognition and catalysis, while the other monomer binds to the replacement base PreQ1. Zn(2+) is required as a cofactor.

It carries out the reaction 7-aminomethyl-7-carbaguanine + guanosine(34) in tRNA = 7-aminomethyl-7-carbaguanosine(34) in tRNA + guanine. It participates in tRNA modification; tRNA-queuosine biosynthesis. In terms of biological role, catalyzes the base-exchange of a guanine (G) residue with the queuine precursor 7-aminomethyl-7-deazaguanine (PreQ1) at position 34 (anticodon wobble position) in tRNAs with GU(N) anticodons (tRNA-Asp, -Asn, -His and -Tyr). Catalysis occurs through a double-displacement mechanism. The nucleophile active site attacks the C1' of nucleotide 34 to detach the guanine base from the RNA, forming a covalent enzyme-RNA intermediate. The proton acceptor active site deprotonates the incoming PreQ1, allowing a nucleophilic attack on the C1' of the ribose to form the product. After dissociation, two additional enzymatic reactions on the tRNA convert PreQ1 to queuine (Q), resulting in the hypermodified nucleoside queuosine (7-(((4,5-cis-dihydroxy-2-cyclopenten-1-yl)amino)methyl)-7-deazaguanosine). The protein is Queuine tRNA-ribosyltransferase of Gluconacetobacter diazotrophicus (strain ATCC 49037 / DSM 5601 / CCUG 37298 / CIP 103539 / LMG 7603 / PAl5).